Here is a 721-residue protein sequence, read N- to C-terminus: Mitogen-activated protein kinase 6 (721 aa).

Met-1 participates in a covalent cross-link: Peptide (Met-Gly) (interchain with G-Cter in ubiquitin). Residues 20-316 (YMDLKPLGCG…AEEALSHPYM (297 aa)) enclose the Protein kinase domain. ATP is bound by residues 26–34 (LGCGGNGLV) and Lys-49. Asp-152 acts as the Proton acceptor in catalysis. Ser-189 carries the phosphoserine; by PAK1, PAK2 and PAK3 modification. An SEG motif motif is present at residues 189 to 191 (SEG). The FRIEDE motif motif lies at 332-337 (FHIEDE). Residues Ser-386, Ser-452, Ser-556, Ser-558, Ser-665, and Ser-684 each carry the phosphoserine modification. Polar residues predominate over residues 701-715 (AMKSSPQIPHQTYSS). Residues 701–721 (AMKSSPQIPHQTYSSILKHLN) form a disordered region.

It belongs to the protein kinase superfamily. CMGC Ser/Thr protein kinase family. MAP kinase subfamily. As to quaternary structure, heterodimer with ERK4/MAPK4. Interacts with (via FRIEDE motif) MAPKAPK5. Interacts with UBE3A; this interaction may be indirect and mediated by HERC2, possibly via HERC2 interaction with NEURL4. Mg(2+) is required as a cofactor. In terms of processing, phosphorylated at Ser-189 by PAK1, PAK2 and PAK3 resulting in catalytic activation. Phosphorylated by MAPKAPK5 at other sites. Post-translationally, ubiquitination at Met-1 leads to degradation by the proteasome pathway. As to expression, highest expression in the skeletal muscle, followed by the brain. Also found in heart, placenta, lung, liver, pancreas, kidney and skin fibroblasts.

It is found in the cytoplasm. The protein resides in the nucleus. The enzyme catalyses L-seryl-[protein] + ATP = O-phospho-L-seryl-[protein] + ADP + H(+). It catalyses the reaction L-threonyl-[protein] + ATP = O-phospho-L-threonyl-[protein] + ADP + H(+). Its activity is regulated as follows. Activated by phosphorylation at Ser-189. Its function is as follows. Atypical MAPK protein. Phosphorylates microtubule-associated protein 2 (MAP2) and MAPKAPK5. The precise role of the complex formed with MAPKAPK5 is still unclear, but the complex follows a complex set of phosphorylation events: upon interaction with atypical MAPKAPK5, ERK3/MAPK6 is phosphorylated at Ser-189 and then mediates phosphorylation and activation of MAPKAPK5, which in turn phosphorylates ERK3/MAPK6. May promote entry in the cell cycle. This chain is Mitogen-activated protein kinase 6 (MAPK6), found in Homo sapiens (Human).